The following is a 1619-amino-acid chain: Rap-GAP domain-containing protein DDB_G0281809 (1619 aa).

4 disordered regions span residues 128–249, 289–316, 907–974, and 1134–1153; these read SMSN…TTPI, QQQQ…MPGS, SIGG…PYIN, and ISNN…TSNN. Composition is skewed to low complexity over residues 130 to 204 and 231 to 249; these read SNNN…SLSL and QISA…TTPI. Residues 265-295 are a coiled coil; the sequence is FNEVVQQQQQQQQQQQQQQQQQQQQQQQQQS. 2 stretches are compositionally biased toward low complexity: residues 916–926 and 934–965; these read SGNSSQPSSTG and SGSK…NGGS. Positions 1273 to 1494 constitute a Rap-GAP domain; that stretch reads LNMLDSVSER…TNRKKLISDI (222 aa). Residues 1554–1619 form a disordered region; that stretch reads IGTFTLPPPP…LSQSEDQSHK (66 aa). Positions 1559–1573 are enriched in pro residues; sequence LPPPPISPTISPQPS. Low complexity predominate over residues 1574–1590; that stretch reads PHLSSSGGSWASSKGGS. Positions 1591 to 1619 are enriched in polar residues; sequence TQPTTPSGRTSNFLSRRPNLSQSEDQSHK.

The polypeptide is Rap-GAP domain-containing protein DDB_G0281809 (Dictyostelium discoideum (Social amoeba)).